A 538-amino-acid polypeptide reads, in one-letter code: Syncytin-2 (538 aa).

The signal sequence occupies residues 1–15; that stretch reads MGLLLLVLILTPSLA. Residues 16 to 478 are Extracellular-facing; that stretch reads AYRHPDFPLL…GWLNWEGTWK (463 aa). Positions 43–46 match the CXXC motif; the sequence is CWLC. 3 disulfides stabilise this stretch: Cys43–Cys46, Cys43–Cys439, and Cys431–Cys438. 8 N-linked (GlcNAc...) asparagine glycosylation sites follow: Asn133, Asn146, Asn177, Asn220, Asn241, Asn247, Asn312, and Asn332. The interval 354–374 is fusion peptide; that stretch reads FIPLLAGLGILAGTGTGIAGI. Residues 414 to 430 carry the CKS-17 motif; the sequence is LQNRRGLDMLTAAQGGI. Residues 431 to 439 carry the CX6CC motif; it reads CLALDEKCC. Residue Asn443 is glycosylated (N-linked (GlcNAc...) asparagine). The chain crosses the membrane as a helical span at residues 479–499; the sequence is WFSWVLPLTGPLVSLLLLLLF. The Cytoplasmic segment spans residues 500 to 538; the sequence is GPCLLNLITQFVSSRLQAIKLQTNLSAGRHPRNIQESPF.

This sequence belongs to the gamma type-C retroviral envelope protein family. HERV class-I FRD env subfamily. As to quaternary structure, the surface and transmembrane proteins form a heterodimer. They are attached by non-covalent interactions or by a labile interchain disulfide bond. In terms of processing, specific enzymatic cleavages in vivo yield the mature SU and TM proteins. Post-translationally, the CXXC motif is highly conserved across a broad range of retroviral envelope proteins. It is thought to participate in the formation of a labile disulfide bond possibly with the CX6CC motif present in the transmembrane protein.

The protein localises to the virion. It is found in the cell membrane. Functionally, this endogenous retroviral envelope protein has retained its original fusogenic properties and participates in trophoblast fusion and the formation of a syncytium during placenta morphogenesis. The interaction with MFSD2A is apparently important for this process. Endogenous envelope proteins may have kept, lost or modified their original function during evolution but this one can still make pseudotypes with MLV, HIV-1 or SIV-1 virions and confer infectivity. Retroviral envelope proteins mediate receptor recognition and membrane fusion during early infection. The surface protein mediates receptor recognition, while the transmembrane protein anchors the envelope heterodimer to the viral membrane through one transmembrane domain. The other hydrophobic domain, called fusion peptide, mediates fusion of the viral membrane with the target cell membrane. The polypeptide is Syncytin-2 (ERVFRD-1) (Pan troglodytes (Chimpanzee)).